We begin with the raw amino-acid sequence, 171 residues long: Spiderine-2a (171 aa).

An N-terminal signal peptide occupies residues 1-18 (MKFALVLLGVCAFYLVNA). The propeptide at 19-58 (TGDLETELEASELQELQEALDLIAETPLESLEAEELEEAR) is removed in mature form. The interval 59-104 (KFKLPKINWGKLASKAKDVYKKGQKLAKNKNVKKALKYGKQLAENL) is linear cationic cytotoxin domain. In terms of domain architecture, Oxytoxin-type inhibitor cystine knot (ICK) spans 118–171 (NNKCWAIGTRCTDDCDCCPEHHCHCPAKSWTFGLIPCSCQVTESDKVNKCPPAE). Disulfide bonds link Cys121/Cys135, Cys128/Cys140, Cys132/Cys167, Cys134/Cys156, and Cys142/Cys154.

Post-translationally, disulfide bonds. Expressed by the venom gland.

It is found in the secreted. Its function is as follows. Has antimicrobial, insecticidal, cytolytic and cytotoxic activity. The polypeptide is Spiderine-2a (Oxyopes takobius (Lynx spider)).